We begin with the raw amino-acid sequence, 408 residues long: MDPKILERLRLGLSDDERRLVIRSATGGEEVTEYSFGIEEEYFLVDAKTLDVAIRTPDDLFDAANWSTGGQAMREMLQAQLEVATNVHVDVGDAREELKFLRREVASVAGQYGLTILACSTHPTALWRNSQPTPKPRYAEMMEDLRIVGQRNMLCGMHVHVQLPDPDRRFAVMRAMIPYIPVFIALSASSPFWNSRETGLKGYRLAAYDELPRTGLPELFTSKKQYDRYVAALTKSGVMPDESHVWWAMRPSLRHPTLELRAPDVCTAVDDAVAIASLYRALARHLYLNPELADAVGNVERAIAVENKWRAQRYGTDCLFVTEDGPVTGQEILNRTIADVAEHAEALGCLAEVERCRTIMQFGSSADYQLQAYRESGGQLAAVTQWIAAATVSRAEPPQSQPSVEPVR.

The protein belongs to the glutamate--cysteine ligase type 2 family. YbdK subfamily.

The enzyme catalyses L-cysteine + L-glutamate + ATP = gamma-L-glutamyl-L-cysteine + ADP + phosphate + H(+). In terms of biological role, ATP-dependent carboxylate-amine ligase which exhibits weak glutamate--cysteine ligase activity. This Bradyrhizobium sp. (strain ORS 278) protein is Putative glutamate--cysteine ligase 2.